A 607-amino-acid chain; its full sequence is Elongation factor 4 (607 aa).

One can recognise a tr-type G domain in the interval 11-193 (ENIRNFSIIA…KIVDVVPAPD (183 aa)). GTP contacts are provided by residues 23 to 28 (DHGKST) and 140 to 143 (NKID).

This sequence belongs to the TRAFAC class translation factor GTPase superfamily. Classic translation factor GTPase family. LepA subfamily.

Its subcellular location is the cell membrane. It carries out the reaction GTP + H2O = GDP + phosphate + H(+). Required for accurate and efficient protein synthesis under certain stress conditions. May act as a fidelity factor of the translation reaction, by catalyzing a one-codon backward translocation of tRNAs on improperly translocated ribosomes. Back-translocation proceeds from a post-translocation (POST) complex to a pre-translocation (PRE) complex, thus giving elongation factor G a second chance to translocate the tRNAs correctly. Binds to ribosomes in a GTP-dependent manner. The polypeptide is Elongation factor 4 (Staphylococcus epidermidis (strain ATCC 35984 / DSM 28319 / BCRC 17069 / CCUG 31568 / BM 3577 / RP62A)).